Reading from the N-terminus, the 99-residue chain is MNDLITNLALPQEVINAAGSNNGAGIGYGLVAVGAGLAMIGALGTGLGQGVSAGKAAEAVGRNPEAEAKIRLMMIIGMGIAETAAIYSLIIAILLIFVY.

The next 2 membrane-spanning stretches (helical) occupy residues 23 to 43 (GAGIGYGLVAVGAGLAMIGAL) and 78 to 98 (MGIAETAAIYSLIIAILLIFV).

This sequence belongs to the ATPase C chain family. F-type ATPases have 2 components, F(1) - the catalytic core - and F(0) - the membrane proton channel. F(1) has five subunits: alpha(3), beta(3), gamma(1), delta(1), epsilon(1). F(0) has three main subunits: a(1), b(2) and c(10-14). The alpha and beta chains form an alternating ring which encloses part of the gamma chain. F(1) is attached to F(0) by a central stalk formed by the gamma and epsilon chains, while a peripheral stalk is formed by the delta and b chains.

It is found in the cell membrane. In terms of biological role, f(1)F(0) ATP synthase produces ATP from ADP in the presence of a proton or sodium gradient. F-type ATPases consist of two structural domains, F(1) containing the extramembraneous catalytic core and F(0) containing the membrane proton channel, linked together by a central stalk and a peripheral stalk. During catalysis, ATP synthesis in the catalytic domain of F(1) is coupled via a rotary mechanism of the central stalk subunits to proton translocation. Key component of the F(0) channel; it plays a direct role in translocation across the membrane. A homomeric c-ring of between 10-14 subunits forms the central stalk rotor element with the F(1) delta and epsilon subunits. The chain is ATP synthase subunit c from Mycoplasma mobile (strain ATCC 43663 / 163K / NCTC 11711) (Mesomycoplasma mobile).